A 480-amino-acid polypeptide reads, in one-letter code: tRNA-2-methylthio-N(6)-dimethylallyladenosine synthase (480 aa).

The region spanning 29-145 (GSFWIQTFGC…LEALLTQVDN (117 aa)) is the MTTase N-terminal domain. Positions 38, 74, 108, 180, 184, and 187 each coordinate [4Fe-4S] cluster. In terms of domain architecture, Radical SAM core spans 166–403 (RDSTICAWVN…NALVERVALQ (238 aa)). Residues 406–474 (SRYSGKVEQV…AFSLSGTPCD (69 aa)) form the TRAM domain.

Belongs to the methylthiotransferase family. MiaB subfamily. In terms of assembly, monomer. [4Fe-4S] cluster is required as a cofactor.

It localises to the cytoplasm. It catalyses the reaction N(6)-dimethylallyladenosine(37) in tRNA + (sulfur carrier)-SH + AH2 + 2 S-adenosyl-L-methionine = 2-methylsulfanyl-N(6)-dimethylallyladenosine(37) in tRNA + (sulfur carrier)-H + 5'-deoxyadenosine + L-methionine + A + S-adenosyl-L-homocysteine + 2 H(+). In terms of biological role, catalyzes the methylthiolation of N6-(dimethylallyl)adenosine (i(6)A), leading to the formation of 2-methylthio-N6-(dimethylallyl)adenosine (ms(2)i(6)A) at position 37 in tRNAs that read codons beginning with uridine. The protein is tRNA-2-methylthio-N(6)-dimethylallyladenosine synthase of Prochlorococcus marinus (strain MIT 9303).